The sequence spans 514 residues: 2,3-bisphosphoglycerate-independent phosphoglycerate mutase (514 aa).

Positions 14 and 64 each coordinate Mn(2+). The active-site Phosphoserine intermediate is Ser64. Substrate-binding positions include His125, 155 to 156 (RD), Arg187, Arg193, 263 to 266 (RADR), and Lys337. Residues Asp404, His408, Asp445, His446, and His463 each contribute to the Mn(2+) site.

It belongs to the BPG-independent phosphoglycerate mutase family. As to quaternary structure, monomer. Requires Mn(2+) as cofactor.

It carries out the reaction (2R)-2-phosphoglycerate = (2R)-3-phosphoglycerate. It participates in carbohydrate degradation; glycolysis; pyruvate from D-glyceraldehyde 3-phosphate: step 3/5. Functionally, catalyzes the interconversion of 2-phosphoglycerate and 3-phosphoglycerate. The polypeptide is 2,3-bisphosphoglycerate-independent phosphoglycerate mutase (Hahella chejuensis (strain KCTC 2396)).